The sequence spans 348 residues: Probable malate dehydrogenase 2, mitochondrial (348 aa).

Residues 1-9 (MNKILTRSF) constitute a mitochondrion transit peptide. 31-37 (GASGQIG) lines the NAD(+) pocket. 2 residues coordinate substrate: Arg112 and Arg118. NAD(+)-binding positions include Asn125, Gln132, and 150–152 (VGN). Asn152 and Arg183 together coordinate substrate. His208 acts as the Proton acceptor in catalysis.

Belongs to the LDH/MDH superfamily. MDH type 2 family. As to quaternary structure, homodimer.

It localises to the mitochondrion. It carries out the reaction (S)-malate + NAD(+) = oxaloacetate + NADH + H(+). Functionally, catalyzes the reversible oxidation of malate to oxaloacetate. This Dictyostelium discoideum (Social amoeba) protein is Probable malate dehydrogenase 2, mitochondrial (mdhB).